Here is a 476-residue protein sequence, read N- to C-terminus: Proline--tRNA ligase 2 (476 aa).

It belongs to the class-II aminoacyl-tRNA synthetase family. ProS type 3 subfamily. In terms of assembly, homodimer.

The protein localises to the cytoplasm. The catalysed reaction is tRNA(Pro) + L-proline + ATP = L-prolyl-tRNA(Pro) + AMP + diphosphate. Its function is as follows. Catalyzes the attachment of proline to tRNA(Pro) in a two-step reaction: proline is first activated by ATP to form Pro-AMP and then transferred to the acceptor end of tRNA(Pro). In Bacillus cereus (strain ATCC 14579 / DSM 31 / CCUG 7414 / JCM 2152 / NBRC 15305 / NCIMB 9373 / NCTC 2599 / NRRL B-3711), this protein is Proline--tRNA ligase 2.